The primary structure comprises 706 residues: Choline transporter-like protein 2 (706 aa).

Over 1 to 33 (MGDERPHYYGKHGTPQKYDPTFKGPIYNRGCTD) the chain is Cytoplasmic. Thr-14 carries the post-translational modification Phosphothreonine. The helical transmembrane segment at 34-54 (IICCVFLLLAIVGYVAVGIIA) threads the bilayer. Residues 55–232 (WTHGDPRKVI…RIFEDYTVSW (178 aa)) are Extracellular-facing. 2 N-linked (GlcNAc...) asparagine glycosylation sites follow: Asn-187 and Asn-200. A helical transmembrane segment spans residues 233–253 (YWIIIGLVIAMAMSLLFIILL). Over 254 to 256 (RFL) the chain is Cytoplasmic. A helical membrane pass occupies residues 257-277 (AGIMVWVMIIMVILVLGYGIF). Residues 278–315 (HCYMEYSRLRGEAGSDVSLVDLGFQTDFRVYLHLRQTW) are Extracellular-facing. Residues 316 to 336 (LAFMIILSILEVIIILLLIFL) traverse the membrane as a helical segment. Over 337-364 (RKRILIAIALIKEASRAVGYVMCSLLYP) the chain is Cytoplasmic. A helical membrane pass occupies residues 365 to 385 (LVTFFLLCLCIAYWASTAVFL). Residues 386–457 (STSNEAVYKI…FNAFMFFWLA (72 aa)) lie on the Extracellular side of the membrane. N-linked (GlcNAc...) asparagine glycosylation occurs at Asn-417. The helical transmembrane segment at 458 to 480 (NFVLALGQVTLAGAFASYYWALR) threads the bilayer. The Cytoplasmic portion of the chain corresponds to 481 to 504 (KPDDLPAFPLFSAFGRALRYHTGS). The helical transmembrane segment at 505 to 525 (LAFGALILAIVQIIRVILEYL) threads the bilayer. Over 526–563 (DQRLKAAENKFAKCLMTCLKCCFWCLEKFIKFLNRNAY) the chain is Extracellular. A helical transmembrane segment spans residues 564-584 (IMIAIYGTNFCTSARNAFFLL). The Cytoplasmic segment spans residues 585-599 (MRNIIRVAVLDKVTD). Residues 600 to 620 (FLFLLGKLLIVGSVGILAFFF) form a helical membrane-spanning segment. Residues 621 to 638 (FTHRIRIVQDTAPPLNYY) are Extracellular-facing. The helical transmembrane segment at 639 to 659 (WVPILTVIVGSYLIAHGFFSV) threads the bilayer. Residues 660 to 706 (YGMCVDTLFLCFLEDLERNDGSAERPYFMSSTLKKLLNKTNKKAAES) lie on the Cytoplasmic side of the membrane.

This sequence belongs to the CTL (choline transporter-like) family. Interacts with COCH. In terms of tissue distribution, present in supporting cells of the inner ear (at protein level). Expressed in inner ear vestibular tissue.

The protein resides in the cell membrane. It localises to the mitochondrion outer membrane. It catalyses the reaction choline(out) + n H(+)(in) = choline(in) + n H(+)(out). The catalysed reaction is ethanolamine(out) + n H(+)(in) = ethanolamine(in) + n H(+)(out). Its function is as follows. Choline/H+ antiporter, mainly in mitochodria. Also acts as a low-affinity ethanolamine/H+ antiporter, regulating the supply of extracellular ethanolamine (Etn) for the CDP-Etn pathway, redistribute intracellular Etn and balance the CDP-Cho and CDP-Etn arms of the Kennedy pathway. Does not exhibit choline transporter activity. This is Choline transporter-like protein 2 from Homo sapiens (Human).